The chain runs to 103 residues: Photosystem II 5 kDa protein, chloroplastic (103 aa).

A chloroplast-targeting transit peptide spans 1-75 (MASMTMTATF…LAKVAMAEEE (75 aa)).

Post-translationally, the maturation of the PSII-T precursor to its final form occurs through a two step process. First, a stromal intermediate is formed, which, upon translocation into the thylakoid membrane, is processed to the mature protein.

It is found in the plastid. The protein localises to the chloroplast thylakoid membrane. Its function is as follows. May be a component of the oxygen-evolving complex. This chain is Photosystem II 5 kDa protein, chloroplastic (PSBT), found in Arabidopsis thaliana (Mouse-ear cress).